A 659-amino-acid chain; its full sequence is WD repeat-containing protein 48 homolog (659 aa).

WD repeat units lie at residues 27-66 (RHRN…SQEP), 73-112 (HHND…CMST), 115-154 (THRD…ALTA), 166-205 (GSKD…KIAK), 208-247 (GHAE…CVQT), 250-289 (VHSE…NSVL), 292-331 (EERA…KLSF), and 337-376 (KGGA…KVED). The tract at residues 592-613 (ASTGNSNSSQNNSQSDANSEGS) is disordered. Residues 596 to 610 (NSNSSQNNSQSDANS) are compositionally biased toward low complexity.

It belongs to the WD repeat WDR48 family. As to quaternary structure, catalytic component of the Usp12-46 deubiquitylase complex consisting of Usp12-46, Wdr20 and Uaf1; regulatory subunit that, together wtih Wdr20, stabilizes Usp12-46. The Usp12-46 deubiquitylase complex associates with arr/arrow; the interaction leads to deubiquitination and stabilization of arr/arrow.

Its function is as follows. Regulatory component of the Usp12-46 deubiquitylase complex. activates deubiquitination by increasing the catalytic turnover without increasing the affinity of deubiquitinating enzymes for the substrate. The complex deubiquitylates the wg/wingless-signaling receptor arr/arrow, which stabilizes the receptor and increases its concentration at the cell surface; this enhances the sensitivity of cells to wg/wingless-signal stimulation. This increases the amplitude and spatial range of the signaling response to the wg/wingless morphogen gradient, facilitating the precise concentration-dependent regulation of its target genes. Together with Wdr20 and Usp12-46 required for wg/wingless-mediated signaling in the wing imaginal disc and for wg/wingless-dependent regulation of intestinal stem cell proliferation. The protein is WD repeat-containing protein 48 homolog of Aedes aegypti (Yellowfever mosquito).